Consider the following 330-residue polypeptide: Polyprenyl transferase ausN (330 aa).

5 consecutive transmembrane segments (helical) span residues 116–136 (AATI…LFLP), 165–185 (LILI…GMEP), 189–209 (ILSM…IDLV), 238–258 (AYSL…LGGL), and 260–280 (VPFV…FLRA).

It belongs to the UbiA prenyltransferase family. It depends on Mg(2+) as a cofactor.

The protein resides in the membrane. It carries out the reaction 3,5-dimethylorsellinate + (2E,6E)-farnesyl diphosphate = (3R)-3-farnesyl-6-hydroxy-2,3,5-trimethyl-4-oxocyclohexa-1,5-diene-1-carboxylate + diphosphate + H(+). It participates in secondary metabolite biosynthesis; terpenoid biosynthesis. Functionally, polyprenyl transferase; part of the gene cluster B that mediates the biosynthesis of austinol and dehydroaustinol, two fungal meroterpenoids. The first step of the pathway is the synthesis of 3,5-dimethylorsellinic acid by the polyketide synthase ausA. 3,5-dimethylorsellinic acid is then prenylated by the polyprenyl transferase ausN. Further epoxidation by the FAD-dependent monooxygenase ausM and cyclization by the probable terpene cyclase ausL lead to the formation of protoaustinoid A. Protoaustinoid A is then oxidized to spiro-lactone preaustinoid A3 by the combined action of the FAD-binding monooxygenases ausB and ausC, and the dioxygenase ausE. Acid-catalyzed keto-rearrangement and ring contraction of the tetraketide portion of preaustinoid A3 by ausJ lead to the formation of preaustinoid A4. The aldo-keto reductase ausK, with the help of ausH, is involved in the next step by transforming preaustinoid A4 into isoaustinone which is in turn hydroxylated by the P450 monooxygenase ausI to form austinolide. Finally, the cytochrome P450 monooxygenase ausG modifies austinolide to austinol. Austinol can be further modified to dehydroaustinol which forms a diffusible complex with diorcinol that initiates conidiation. Due to genetic rearrangements of the clusters and the subsequent loss of some enzymes, the end products of the Emericella nidulans austinoid biosynthesis clusters are austinol and dehydroaustinol, even if additional enzymes, such as the O-acetyltransferase ausQ and the cytochrome P450 monooxygenase ausR are still functional. This Emericella nidulans (strain FGSC A4 / ATCC 38163 / CBS 112.46 / NRRL 194 / M139) (Aspergillus nidulans) protein is Polyprenyl transferase ausN.